Consider the following 273-residue polypeptide: Nitrogenase iron protein 4 (273 aa).

Residue G8–S15 coordinates ATP. A [4Fe-4S] cluster-binding site is contributed by C94. Position 97 is an ADP-ribosylarginine; by dinitrogenase reductase ADP-ribosyltransferase (R97). C129 lines the [4Fe-4S] cluster pocket.

The protein belongs to the NifH/BchL/ChlL family. In terms of assembly, homodimer. Requires [4Fe-4S] cluster as cofactor. Post-translationally, the reversible ADP-ribosylation of Arg-97 inactivates the nitrogenase reductase and regulates nitrogenase activity.

It carries out the reaction N2 + 8 reduced [2Fe-2S]-[ferredoxin] + 16 ATP + 16 H2O = H2 + 8 oxidized [2Fe-2S]-[ferredoxin] + 2 NH4(+) + 16 ADP + 16 phosphate + 6 H(+). Its function is as follows. The key enzymatic reactions in nitrogen fixation are catalyzed by the nitrogenase complex, which has 2 components: the iron protein and the molybdenum-iron protein. The protein is Nitrogenase iron protein 4 (nifH4) of Clostridium pasteurianum.